The sequence spans 514 residues: Protein Tube (514 aa).

5 disordered regions span residues 226 to 250 (VPQQ…RSSR), 255 to 274 (TASN…SNTA), 324 to 343 (LDAG…STST), 366 to 385 (ASDA…VPDM), and 413 to 514 (NGAK…ELQQ). Over residues 259 to 274 (VAPTTASNAPSASNTA) the composition is skewed to low complexity. The span at 422 to 433 (ADNNSSGTNSLS) shows a compositional bias: polar residues. The span at 434–460 (NDDDEQKEDDDDDDDDDVVDVDDEEAD) shows a compositional bias: acidic residues. Residues 477–514 (TTVTCTSGENSFEFTNDSSSASNDDYTNNIPNLSELQQ) show a composition bias toward polar residues.

Maternal and zygotic gene product.

Its subcellular location is the cytoplasm. Functionally, required for the determination of embryonic dorsoventral polarity. Is involved in transduction of information regulating nuclear import of dorsal protein. In Drosophila virilis (Fruit fly), this protein is Protein Tube (tub).